The chain runs to 91 residues: Acylphosphatase (91 aa).

One can recognise an Acylphosphatase-like domain in the interval 5–91; it reads RLHAIVEGEV…KGEFTSFDTY (87 aa). Residues arginine 20 and asparagine 38 contribute to the active site.

The protein belongs to the acylphosphatase family.

It catalyses the reaction an acyl phosphate + H2O = a carboxylate + phosphate + H(+). This is Acylphosphatase (acyP) from Metallosphaera sedula (strain ATCC 51363 / DSM 5348 / JCM 9185 / NBRC 15509 / TH2).